Consider the following 530-residue polypeptide: T-complex protein 1 subunit gamma (530 aa).

Belongs to the TCP-1 chaperonin family. Heterooligomeric complex of about 850 to 900 kDa that forms two stacked rings, 12 to 16 nm in diameter.

The protein localises to the cytoplasm. Functionally, molecular chaperone; assists the folding of proteins upon ATP hydrolysis. Known to play a role, in vitro, in the folding of actin and tubulin. This chain is T-complex protein 1 subunit gamma (cct3), found in Dictyostelium discoideum (Social amoeba).